Here is a 500-residue protein sequence, read N- to C-terminus: MTIFDNYEVWFVIGSQHLYGPETLRQVTQHAEHVVNALNTEAKLPCKLVLKPLGTTPDEITAICRDANYDDRCAGLVVWLHTFSPAKMWINGLTMLNKPLLQFHTQFNAALPWDSIDMDFMNLNQTAHGGREFGFIGARMRQQHAVVTGHWQDKQAHERIGSWMRQAVSKQDTRHLKVCRFGDNMREVAVTDGDKVAAQIKFGFSVNTWAVGDLVQVVNSISDGDVNALVDEYESCYTMTPATQIHGEKRQNVLEAARIELGMKRFLEQGGFHAFTTTFEDLHGLKQLPGLAVQRLMQQGYGFAGEGDWKTAALLRIMKVMSTGLQGGTSFMEDYTYHFEKGNDLVLGSHMLEVCPSIAVEEKPILDVQHLGIGGKDDPARLIFNTQTGPAIVASLIDLGDRYRLLVNCIDTVKTPHSLPKLPVANALWKAQPDLPTASEAWILAGGAHHTVFSHALNLNDMRQFAEMHDIEITVIDNDTRLPAFKDALRWNEVYYGFRR.

Mn(2+) is bound by residues glutamate 306, glutamate 333, histidine 350, and histidine 450.

It belongs to the arabinose isomerase family. In terms of assembly, homohexamer. Requires Mn(2+) as cofactor.

It carries out the reaction beta-L-arabinopyranose = L-ribulose. It functions in the pathway carbohydrate degradation; L-arabinose degradation via L-ribulose; D-xylulose 5-phosphate from L-arabinose (bacterial route): step 1/3. Catalyzes the conversion of L-arabinose to L-ribulose. This Escherichia coli O139:H28 (strain E24377A / ETEC) protein is L-arabinose isomerase.